The sequence spans 76 residues: Defensin-like protein 71 (76 aa).

An N-terminal signal peptide occupies residues 1 to 22; that stretch reads MAMTQVFVIFILLATSLCNSNA. 4 disulfide bridges follow: cysteine 36-cysteine 74, cysteine 40-cysteine 63, cysteine 49-cysteine 72, and cysteine 53-cysteine 73.

This sequence belongs to the DEFL family.

It is found in the secreted. The polypeptide is Defensin-like protein 71 (LCR84) (Arabidopsis thaliana (Mouse-ear cress)).